The chain runs to 137 residues: Large ribosomal subunit protein uL16 (137 aa).

The protein belongs to the universal ribosomal protein uL16 family. Part of the 50S ribosomal subunit.

Functionally, binds 23S rRNA and is also seen to make contacts with the A and possibly P site tRNAs. In Beijerinckia indica subsp. indica (strain ATCC 9039 / DSM 1715 / NCIMB 8712), this protein is Large ribosomal subunit protein uL16.